The chain runs to 843 residues: Protein P (843 aa).

The interval 1–177 (MPLSYQHFRR…FCGSPYSWEQ (177 aa)) is terminal protein domain (TP). The spacer stretch occupies residues 178–346 (ELQHGSTSLN…YCLSHIINLL (169 aa)). Residues 228-316 (KQGQLANGKQ…VPPSTVGSES (89 aa)) form a disordered region. Polar residues-rich tracts occupy residues 262–276 (TGHS…TSRF), 286–299 (NPSL…TSTG), and 307–316 (VPPSTVGSES). Positions 347–690 (EDWGPCYEHG…YMNLYPVARQ (344 aa)) are polymerase/reverse transcriptase domain (RT). The Reverse transcriptase domain occupies 357–600 (EHHIRTPRTP…YSLHFMGYII (244 aa)). Mg(2+)-binding residues include aspartate 429, aspartate 551, and aspartate 552.

It belongs to the hepadnaviridae P protein family.

The enzyme catalyses DNA(n) + a 2'-deoxyribonucleoside 5'-triphosphate = DNA(n+1) + diphosphate. The catalysed reaction is Endonucleolytic cleavage to 5'-phosphomonoester.. With respect to regulation, activated by host HSP70 and HSP40 in vitro to be able to bind the epsilon loop of the pgRNA. Because deletion of the RNase H region renders the protein partly chaperone-independent, the chaperones may be needed indirectly to relieve occlusion of the RNA-binding site by this domain. Inhibited by several reverse-transcriptase inhibitors: Lamivudine, Adefovir and Entecavir. Multifunctional enzyme that converts the viral RNA genome into dsDNA in viral cytoplasmic capsids. This enzyme displays a DNA polymerase activity that can copy either DNA or RNA templates, and a ribonuclease H (RNase H) activity that cleaves the RNA strand of RNA-DNA heteroduplexes in a partially processive 3'- to 5'-endonucleasic mode. Neo-synthesized pregenomic RNA (pgRNA) are encapsidated together with the P protein, and reverse-transcribed inside the nucleocapsid. Initiation of reverse-transcription occurs first by binding the epsilon loop on the pgRNA genome, and is initiated by protein priming, thereby the 5'-end of (-)DNA is covalently linked to P protein. Partial (+)DNA is synthesized from the (-)DNA template and generates the relaxed circular DNA (RC-DNA) genome. After budding and infection, the RC-DNA migrates in the nucleus, and is converted into a plasmid-like covalently closed circular DNA (cccDNA). The activity of P protein does not seem to be necessary for cccDNA generation, and is presumably released from (+)DNA by host nuclear DNA repair machinery. In Homo sapiens (Human), this protein is Protein P.